The following is an 827-amino-acid chain: Lon protease (827 aa).

The tract at residues 1–27 (MNDETLREQTTAESEETSPTTPSPEPE) is disordered. A Lon N-terminal domain is found at 32 to 225 (LPLIPLEGAV…KVLMFYRKQF (194 aa)). ATP is bound at residue 385–392 (GPPGVGKT). A Lon proteolytic domain is found at 625 to 806 (IDQPGVAIGL…DEVLSIALLP (182 aa)). Catalysis depends on residues Ser712 and Lys755.

This sequence belongs to the peptidase S16 family. In terms of assembly, homohexamer. Organized in a ring with a central cavity.

It is found in the cytoplasm. It catalyses the reaction Hydrolysis of proteins in presence of ATP.. Its function is as follows. ATP-dependent serine protease that mediates the selective degradation of mutant and abnormal proteins as well as certain short-lived regulatory proteins. Required for cellular homeostasis and for survival from DNA damage and developmental changes induced by stress. Degrades polypeptides processively to yield small peptide fragments that are 5 to 10 amino acids long. Binds to DNA in a double-stranded, site-specific manner. The protein is Lon protease of Chloroflexus aurantiacus (strain ATCC 29366 / DSM 635 / J-10-fl).